The chain runs to 353 residues: Methionine import ATP-binding protein MetN (353 aa).

In terms of domain architecture, ABC transporter spans 8-249 (LDQIDVTFHQ…PKQPLTQDFI (242 aa)). 42–49 (GYSGAGKS) lines the ATP pocket.

It belongs to the ABC transporter superfamily. Methionine importer (TC 3.A.1.24) family. In terms of assembly, the complex is composed of two ATP-binding proteins (MetN), two transmembrane proteins (MetI) and a solute-binding protein (MetQ).

The protein resides in the cell membrane. The enzyme catalyses L-methionine(out) + ATP + H2O = L-methionine(in) + ADP + phosphate + H(+). It catalyses the reaction D-methionine(out) + ATP + H2O = D-methionine(in) + ADP + phosphate + H(+). In terms of biological role, part of the ABC transporter complex MetNIQ involved in methionine import. Responsible for energy coupling to the transport system. This is Methionine import ATP-binding protein MetN from Streptococcus pneumoniae serotype 4 (strain ATCC BAA-334 / TIGR4).